The following is a 408-amino-acid chain: Tyrosine--tRNA ligase (408 aa).

Residue Tyr-35 coordinates L-tyrosine. The 'HIGH' region motif lies at 40-49; that stretch reads PTADSLHVGH. L-tyrosine-binding residues include Tyr-168 and Gln-172. Residues 228–232 carry the 'KMSKS' region motif; it reads KMGKT. An ATP-binding site is contributed by Lys-231. Residues 342 to 407 enclose the S4 RNA-binding domain; it reads INIIDLLLKT…GKKTYHRVKL (66 aa).

Belongs to the class-I aminoacyl-tRNA synthetase family. TyrS type 1 subfamily. In terms of assembly, homodimer.

Its subcellular location is the cytoplasm. It catalyses the reaction tRNA(Tyr) + L-tyrosine + ATP = L-tyrosyl-tRNA(Tyr) + AMP + diphosphate + H(+). Its function is as follows. Catalyzes the attachment of tyrosine to tRNA(Tyr) in a two-step reaction: tyrosine is first activated by ATP to form Tyr-AMP and then transferred to the acceptor end of tRNA(Tyr). The polypeptide is Tyrosine--tRNA ligase (Acetivibrio thermocellus (strain ATCC 27405 / DSM 1237 / JCM 9322 / NBRC 103400 / NCIMB 10682 / NRRL B-4536 / VPI 7372) (Clostridium thermocellum)).